The primary structure comprises 601 residues: Cdc42-interacting protein 4 (601 aa).

Positions 1-117 (MDWGTELWDQ…EMKQERKMHF (117 aa)) are required for podosome formation and interaction with AKAP9 and microtubules. Positions 1-117 (MDWGTELWDQ…EMKQERKMHF (117 aa)) are required for translocation to the plasma membrane in response to insulin. The 264-residue stretch at 1–264 (MDWGTELWDQ…AANAVDPKND (264 aa)) folds into the F-BAR domain. A coiled-coil region spans residues 67-259 (FSQQQSFVQI…EGMKVAANAV (193 aa)). Disordered regions lie at residues 280–358 (GDVE…GRDP), 390–420 (DFSH…EVDQ), and 479–543 (RGDS…SPIG). Positions 289–302 (QPMNRAPSDSSLGT) are enriched in polar residues. Residues 293–537 (RAPSDSSLGT…TEFDEDFEEE (245 aa)) form an interaction with CDC42 region. Positions 293–601 (RAPSDSSLGT…PTSYLRVTLN (309 aa)) are interaction with PDE6G. S296, S298, and S299 each carry phosphoserine. The span at 314 to 329 (GRSRTKRWPFGKKNKP) shows a compositional bias: basic residues. At S335 the chain carries Phosphoserine. Over residues 336 to 346 (PLGGPVPSALP) the composition is skewed to low complexity. The residue at position 351 (S351) is a Phosphoserine. The stretch at 388–481 (TEDFSHLPPE…ESRVLSNRGD (94 aa)) forms a coiled coil. Positions 393 to 470 (HLPPEQQRKR…VQKYEAWLAE (78 aa)) constitute an REM-1 domain. A compositionally biased stretch (basic and acidic residues) spans 407-420 (LEERSRELQKEVDQ). The tract at residues 471–601 (AESRVLSNRG…PTSYLRVTLN (131 aa)) is required for interaction with FASLG and localization to lysosomes. S482 carries the phosphoserine modification. The segment at 487 to 541 (ARPPDPPASAPPDSSSNSASQDTKESSEEPPSEESQDTPIYTEFDEDFEEEPTSP) is interaction with DNM2 and WASL. Low complexity predominate over residues 497–506 (PPDSSSNSAS). Residues 529-538 (EFDEDFEEEP) show a composition bias toward acidic residues. The tract at residues 529–601 (EFDEDFEEEP…PTSYLRVTLN (73 aa)) is interaction with DNM1 and WASL. A required for podosome formation region spans residues 538–601 (PTSPIGHCVA…PTSYLRVTLN (64 aa)). The region spanning 540 to 601 (SPIGHCVAIY…PTSYLRVTLN (62 aa)) is the SH3 domain. The interaction with WAS stretch occupies residues 544–601 (HCVAIYHFEGSSEGTISMAEGEDLSLMEEDKGDGWTRVRRKEGGEGYVPTSYLRVTLN). The tract at residues 546-601 (VAIYHFEGSSEGTISMAEGEDLSLMEEDKGDGWTRVRRKEGGEGYVPTSYLRVTLN) is interaction with ARHGAP17, DAAM1, DIAPH1 and DIAPH2.

Belongs to the FNBP1 family. Interacts specifically with GTP-bound RHOQ. Interacts with DNM2 and PDE6G. Homodimerizes, the dimers can polymerize end-to-end to form filamentous structures. Interacts specifically with GTP-bound CDC42. Interacts with AKAP9, ARHGAP17, DAAM1, DIAPH1, DIAPH2, DNM1, FASLG/FASL, GAPVD1, LYN, microtubules, SRC, WAS/WASP and WASL/N-WASP. Interacts with the ligand binding domain of the thyroid receptor (TR) in the presence of thyroid hormone. May interact with CTNNB1 and HD/HTT. Post-translationally, tyrosine phosphorylated. Also phosphorylated by PKA. Expressed in brain, colon, heart, kidney, liver, lung, megakaryocyte, ovary, pancreas, peripheral blood lymphocytes, placenta, prostate, skeletal muscle, small intestine, spleen, testis, thymus and trachea.

The protein localises to the cytoplasm. The protein resides in the cytoskeleton. Its subcellular location is the cell cortex. It localises to the lysosome. It is found in the golgi apparatus. The protein localises to the cell membrane. The protein resides in the cell projection. Its subcellular location is the phagocytic cup. It localises to the perinuclear region. Functionally, required for translocation of GLUT4 to the plasma membrane in response to insulin signaling. Required to coordinate membrane tubulation with reorganization of the actin cytoskeleton during endocytosis. Binds to lipids such as phosphatidylinositol 4,5-bisphosphate and phosphatidylserine and promotes membrane invagination and the formation of tubules. Also promotes CDC42-induced actin polymerization by recruiting WASL/N-WASP which in turn activates the Arp2/3 complex. Actin polymerization may promote the fission of membrane tubules to form endocytic vesicles. Required for the formation of podosomes, actin-rich adhesion structures specific to monocyte-derived cells. May be required for the lysosomal retention of FASLG/FASL. The sequence is that of Cdc42-interacting protein 4 (TRIP10) from Homo sapiens (Human).